We begin with the raw amino-acid sequence, 66 residues long: Large ribosomal subunit protein bL33c (66 aa).

Belongs to the bacterial ribosomal protein bL33 family.

The protein resides in the plastid. It localises to the chloroplast. This Physcomitrium patens (Spreading-leaved earth moss) protein is Large ribosomal subunit protein bL33c.